Reading from the N-terminus, the 66-residue chain is Rho-elapitoxin-Da1b (66 aa).

Cystine bridges form between Cys3–Cys24, Cys17–Cys42, Cys46–Cys58, and Cys59–Cys64.

Belongs to the three-finger toxin family. Short-chain subfamily. Aminergic toxin sub-subfamily. In terms of tissue distribution, expressed by the venom gland.

The protein resides in the secreted. Functionally, non-competitive antagonist of alpha-2 adrenergic receptors (ADRA2) in smooth muscles, and partial antagonist of D3 dopamine receptors (DRD3) (inhibits 25% of methylspiperone binding to this receptor). Also shows a low antagonism on D2 dopamine receptors (DRD2) (short isoform). Shows high affinity to adrenergic receptors (Ki=14 nM (ADRA2A), Ki=73 nM (ADRA2B), and Ki=38 nM (ADRA2C)). Increases heart rate and blood catecholamine concentrations. This chain is Rho-elapitoxin-Da1b, found in Dendroaspis angusticeps (Eastern green mamba).